The sequence spans 466 residues: Histidine--tRNA ligase (466 aa).

It belongs to the class-II aminoacyl-tRNA synthetase family. As to quaternary structure, homodimer.

Its subcellular location is the cytoplasm. It catalyses the reaction tRNA(His) + L-histidine + ATP = L-histidyl-tRNA(His) + AMP + diphosphate + H(+). The chain is Histidine--tRNA ligase from Bifidobacterium longum subsp. infantis (strain ATCC 15697 / DSM 20088 / JCM 1222 / NCTC 11817 / S12).